The sequence spans 406 residues: Acetylornithine/succinyldiaminopimelate aminotransferase (406 aa).

Residues 108–109 (GT) and Phe141 each bind pyridoxal 5'-phosphate. A N(2)-acetyl-L-ornithine-binding site is contributed by Arg144. 226 to 229 (DEVQ) is a binding site for pyridoxal 5'-phosphate. At Lys255 the chain carries N6-(pyridoxal phosphate)lysine. Ser283 lines the N(2)-acetyl-L-ornithine pocket. Residue Thr284 participates in pyridoxal 5'-phosphate binding.

This sequence belongs to the class-III pyridoxal-phosphate-dependent aminotransferase family. ArgD subfamily. In terms of assembly, homodimer. Requires pyridoxal 5'-phosphate as cofactor.

It localises to the cytoplasm. It carries out the reaction N(2)-acetyl-L-ornithine + 2-oxoglutarate = N-acetyl-L-glutamate 5-semialdehyde + L-glutamate. The catalysed reaction is N-succinyl-(2S,6S)-2,6-diaminopimelate + 2-oxoglutarate = (S)-2-succinylamino-6-oxoheptanedioate + L-glutamate. It functions in the pathway amino-acid biosynthesis; L-arginine biosynthesis; N(2)-acetyl-L-ornithine from L-glutamate: step 4/4. Its pathway is amino-acid biosynthesis; L-lysine biosynthesis via DAP pathway; LL-2,6-diaminopimelate from (S)-tetrahydrodipicolinate (succinylase route): step 2/3. In terms of biological role, involved in both the arginine and lysine biosynthetic pathways. The protein is Acetylornithine/succinyldiaminopimelate aminotransferase of Escherichia coli O6:H1 (strain CFT073 / ATCC 700928 / UPEC).